The sequence spans 130 residues: Large ribosomal subunit protein bL12 (130 aa).

The protein belongs to the bacterial ribosomal protein bL12 family. In terms of assembly, homodimer. Part of the ribosomal stalk of the 50S ribosomal subunit. Forms a multimeric L10(L12)X complex, where L10 forms an elongated spine to which 2 to 4 L12 dimers bind in a sequential fashion. Binds GTP-bound translation factors.

In terms of biological role, forms part of the ribosomal stalk which helps the ribosome interact with GTP-bound translation factors. Is thus essential for accurate translation. This is Large ribosomal subunit protein bL12 from Mycolicibacterium vanbaalenii (strain DSM 7251 / JCM 13017 / BCRC 16820 / KCTC 9966 / NRRL B-24157 / PYR-1) (Mycobacterium vanbaalenii).